Reading from the N-terminus, the 122-residue chain is MIQTLSKLKVADNSGAKEVRVIRNLGGSVRKFSGIGDIIICSVISATPGAVIKKGQVVKAVIVRTTRELRREDGTYIKFSENAAVLIKEDKTPRGTRIFGPIAREIKEAGFAKIASLAPEVL.

The protein belongs to the universal ribosomal protein uL14 family. Part of the 50S ribosomal subunit. Forms a cluster with proteins L3 and L19. In the 70S ribosome, L14 and L19 interact and together make contacts with the 16S rRNA in bridges B5 and B8.

In terms of biological role, binds to 23S rRNA. Forms part of two intersubunit bridges in the 70S ribosome. This chain is Large ribosomal subunit protein uL14, found in Mycoplasma capricolum subsp. capricolum (strain California kid / ATCC 27343 / NCTC 10154).